A 142-amino-acid chain; its full sequence is Transcription antitermination protein NusB (142 aa).

Belongs to the NusB family.

Its function is as follows. Involved in transcription antitermination. Required for transcription of ribosomal RNA (rRNA) genes. Binds specifically to the boxA antiterminator sequence of the ribosomal RNA (rrn) operons. This chain is Transcription antitermination protein NusB, found in Borreliella burgdorferi (strain ATCC 35210 / DSM 4680 / CIP 102532 / B31) (Borrelia burgdorferi).